We begin with the raw amino-acid sequence, 77 residues long: Translation initiation factor IF-1, chloroplastic (77 aa).

Residues 1-72 (MKKQNLIEME…TKGRITYRLR (72 aa)) form the S1-like domain.

Belongs to the IF-1 family. In terms of assembly, component of the 30S ribosomal translation pre-initiation complex which assembles on the 30S ribosome in the order IF-2 and IF-3, IF-1 and N-formylmethionyl-tRNA(fMet); mRNA recruitment can occur at any time during PIC assembly.

Its subcellular location is the plastid. It is found in the chloroplast. Functionally, one of the essential components for the initiation of protein synthesis. Stabilizes the binding of IF-2 and IF-3 on the 30S subunit to which N-formylmethionyl-tRNA(fMet) subsequently binds. Helps modulate mRNA selection, yielding the 30S pre-initiation complex (PIC). Upon addition of the 50S ribosomal subunit IF-1, IF-2 and IF-3 are released leaving the mature 70S translation initiation complex. The protein is Translation initiation factor IF-1, chloroplastic of Zygnema circumcarinatum (Green alga).